Here is a 559-residue protein sequence, read N- to C-terminus: Potassium-transporting ATPase potassium-binding subunit (559 aa).

13 helical membrane passes run 5-25, 27-47, 63-83, 132-152, 170-190, 253-273, 283-303, 327-347, 356-376, 379-399, 416-436, 484-504, and 524-544; these read GFLL…PLGS, LARL…RILW, LLAL…LLFW, GLTV…FALI, LVRI…LFFI, LAQM…FGEA, LLWA…WAEV, FGVL…CGAV, ALGG…FGGV, GLYG…LMIG, MTAL…ALAM, LLAF…MAIA, and GALF…LTFI.

This sequence belongs to the KdpA family. In terms of assembly, the system is composed of three essential subunits: KdpA, KdpB and KdpC.

The protein localises to the cell inner membrane. Part of the high-affinity ATP-driven potassium transport (or Kdp) system, which catalyzes the hydrolysis of ATP coupled with the electrogenic transport of potassium into the cytoplasm. This subunit binds the periplasmic potassium ions and delivers the ions to the membrane domain of KdpB through an intramembrane tunnel. In Salmonella choleraesuis (strain SC-B67), this protein is Potassium-transporting ATPase potassium-binding subunit.